Here is a 312-residue protein sequence, read N- to C-terminus: Nodulation protein D 2 (312 aa).

The region spanning 6-63 (LDLNLLVALDALMTKRSVTAAARSINLSQPAMSAAIARLRTYFGDDLFTMRGRELIPT) is the HTH lysR-type domain. A DNA-binding region (H-T-H motif) is located at residues 23–42 (VTAAARSINLSQPAMSAAIA).

It belongs to the LysR transcriptional regulatory family.

Its function is as follows. Represses the expression of the nodABCIJ-nolO-noeI operon. The sequence is that of Nodulation protein D 2 (nodD2) from Sinorhizobium fredii (strain NBRC 101917 / NGR234).